We begin with the raw amino-acid sequence, 667 residues long: Mediator of RNA polymerase II transcription subunit 17 (667 aa).

The stretch at 172 to 197 (KRRALQEAVQVLDMAQKQRQRASSNL) forms a coiled coil.

This sequence belongs to the Mediator complex subunit 17 family. In terms of assembly, component of the Mediator complex.

It is found in the nucleus. Functionally, component of the Mediator complex, a coactivator involved in regulated gene transcription of nearly all RNA polymerase II-dependent genes. Mediator functions as a bridge to convey information from gene-specific regulatory proteins to the basal RNA polymerase II transcription machinery. Mediator is recruited to promoters by direct interactions with regulatory proteins and serves as a scaffold for the assembly of a functional preinitiation complex with RNA polymerase II and the general transcription factors. In Caenorhabditis elegans, this protein is Mediator of RNA polymerase II transcription subunit 17 (mdt-17).